The chain runs to 397 residues: Golgi-associated RAB2 interactor protein 2 (397 aa).

2 disordered regions span residues 1 to 24 (MKKS…PDSK) and 342 to 397 (QTTL…KLLN). Basic and acidic residues-rich tracts occupy residues 10-24 (TRID…PDSK), 353-369 (EKSK…RTMD), and 376-397 (KAEE…KLLN).

The protein belongs to the GARIN family. In terms of assembly, interacts with CALM1.

The protein resides in the cell projection. It localises to the cilium. Its subcellular location is the flagellum. In terms of biological role, seems to play a role in sperm motility. The chain is Golgi-associated RAB2 interactor protein 2 (GARIN2) from Bos taurus (Bovine).